The following is a 170-amino-acid chain: Lipoprotein signal peptidase (170 aa).

3 helical membrane-spanning segments follow: residues 13–33, 72–92, and 96–113; these read IFIS…VKYI, LFFL…ALKE, and IARI…GNII. Active-site residues include D124 and D146. Residues 142-162 traverse the membrane as a helical segment; that stretch reads FNFADSYVVIGITLFIIYDLF.

Belongs to the peptidase A8 family.

The protein resides in the cell inner membrane. It carries out the reaction Release of signal peptides from bacterial membrane prolipoproteins. Hydrolyzes -Xaa-Yaa-Zaa-|-(S,diacylglyceryl)Cys-, in which Xaa is hydrophobic (preferably Leu), and Yaa (Ala or Ser) and Zaa (Gly or Ala) have small, neutral side chains.. It participates in protein modification; lipoprotein biosynthesis (signal peptide cleavage). In terms of biological role, this protein specifically catalyzes the removal of signal peptides from prolipoproteins. The protein is Lipoprotein signal peptidase of Borrelia turicatae (strain 91E135).